A 320-amino-acid chain; its full sequence is Cytochrome f (320 aa).

The first 35 residues, 1-35 (MQTRNAFSWLKKQITRSISVSLMIYILTRTSISSA), serve as a signal peptide directing secretion. Tyrosine 36, cysteine 56, cysteine 59, and histidine 60 together coordinate heme. Residues 286–306 (VQGLLFFLASVILAQIFLVLK) form a helical membrane-spanning segment.

It belongs to the cytochrome f family. The 4 large subunits of the cytochrome b6-f complex are cytochrome b6, subunit IV (17 kDa polypeptide, petD), cytochrome f and the Rieske protein, while the 4 small subunits are PetG, PetL, PetM and PetN. The complex functions as a dimer. Heme is required as a cofactor.

The protein localises to the plastid. The protein resides in the chloroplast thylakoid membrane. Functionally, component of the cytochrome b6-f complex, which mediates electron transfer between photosystem II (PSII) and photosystem I (PSI), cyclic electron flow around PSI, and state transitions. The chain is Cytochrome f from Nicotiana sylvestris (Wood tobacco).